The chain runs to 227 residues: Cytochrome c oxidase subunit 2 (227 aa).

Topologically, residues 1-14 are mitochondrial intermembrane; it reads MAYPFQLGFQDATS. Residues 15–45 form a helical membrane-spanning segment; that stretch reads PIMEELLHFHDHTLMIVFLISSLVLYIITLM. Residues 46–59 are Mitochondrial matrix-facing; sequence LTTKLTHTSTMDAQ. A helical transmembrane segment spans residues 60–87; the sequence is EVETVWTILPAIILILIALPSLRILYMM. At 88–227 the chain is on the mitochondrial intermembrane side; that stretch reads DEVNNPSLTV…IFEKWSASML (140 aa). The Cu cation site is built by His161, Cys196, Glu198, Cys200, His204, and Met207. A Mg(2+)-binding site is contributed by Glu198.

Belongs to the cytochrome c oxidase subunit 2 family. As to quaternary structure, component of the cytochrome c oxidase (complex IV, CIV), a multisubunit enzyme composed of 14 subunits. The complex is composed of a catalytic core of 3 subunits MT-CO1, MT-CO2 and MT-CO3, encoded in the mitochondrial DNA, and 11 supernumerary subunits COX4I, COX5A, COX5B, COX6A, COX6B, COX6C, COX7A, COX7B, COX7C, COX8 and NDUFA4, which are encoded in the nuclear genome. The complex exists as a monomer or a dimer and forms supercomplexes (SCs) in the inner mitochondrial membrane with NADH-ubiquinone oxidoreductase (complex I, CI) and ubiquinol-cytochrome c oxidoreductase (cytochrome b-c1 complex, complex III, CIII), resulting in different assemblies (supercomplex SCI(1)III(2)IV(1) and megacomplex MCI(2)III(2)IV(2)). Found in a complex with TMEM177, COA6, COX18, COX20, SCO1 and SCO2. Interacts with TMEM177 in a COX20-dependent manner. Interacts with COX20. Interacts with COX16. The cofactor is Cu cation.

Its subcellular location is the mitochondrion inner membrane. The catalysed reaction is 4 Fe(II)-[cytochrome c] + O2 + 8 H(+)(in) = 4 Fe(III)-[cytochrome c] + 2 H2O + 4 H(+)(out). Functionally, component of the cytochrome c oxidase, the last enzyme in the mitochondrial electron transport chain which drives oxidative phosphorylation. The respiratory chain contains 3 multisubunit complexes succinate dehydrogenase (complex II, CII), ubiquinol-cytochrome c oxidoreductase (cytochrome b-c1 complex, complex III, CIII) and cytochrome c oxidase (complex IV, CIV), that cooperate to transfer electrons derived from NADH and succinate to molecular oxygen, creating an electrochemical gradient over the inner membrane that drives transmembrane transport and the ATP synthase. Cytochrome c oxidase is the component of the respiratory chain that catalyzes the reduction of oxygen to water. Electrons originating from reduced cytochrome c in the intermembrane space (IMS) are transferred via the dinuclear copper A center (CU(A)) of subunit 2 and heme A of subunit 1 to the active site in subunit 1, a binuclear center (BNC) formed by heme A3 and copper B (CU(B)). The BNC reduces molecular oxygen to 2 water molecules using 4 electrons from cytochrome c in the IMS and 4 protons from the mitochondrial matrix. This is Cytochrome c oxidase subunit 2 (MT-CO2) from Balaenoptera borealis (Sei whale).